The chain runs to 114 residues: UPF0342 protein SE_1526 (114 aa).

This sequence belongs to the UPF0342 family.

The chain is UPF0342 protein SE_1526 from Staphylococcus epidermidis (strain ATCC 12228 / FDA PCI 1200).